Reading from the N-terminus, the 527-residue chain is Putative transcription factor p65 homolog (527 aa).

Positions 18–306 constitute an RHD domain; the sequence is PPVEIIEQPK…HIDEKRKRTL (289 aa). S276 carries the phosphoserine; by PKA modification. The Nuclear localization signal signature appears at 301–304; that stretch reads KRKR. 2 transcriptional activation domain regions span residues 381 to 444 and 494 to 527; these read ISDF…DFSQ and DSGLINGMFDISREEIHLTSLFELDFSSLLSNMK. Positions 513-521 match the 9aaTAD motif; sequence SLFELDFSS.

Predominantly in the animal hemisphere of the oocyte; all tissues of early embryo.

It is found in the nucleus. Its subcellular location is the cytoplasm. NF-kappa-B is a pleiotropic transcription factor present in almost all cell types and is the endpoint of a series of signal transduction events that are initiated by a vast array of stimuli related to many biological processes such as inflammation, immunity, differentiation, cell growth, tumorigenesis and apoptosis. NF-kappa-B is a homo- or heterodimeric complex formed by the Rel-like domain-containing proteins. The dimers bind at kappa-B sites in the DNA of their target genes and the individual dimers have distinct preferences for different kappa-B sites that they can bind with distinguishable affinity and specificity. Different dimer combinations act as transcriptional activators or repressors, respectively. NF-kappa-B is controlled by various mechanisms of post-translational modification and subcellular compartmentalization as well as by interactions with other cofactors or corepressors. NF-kappa-B complexes are held in the cytoplasm in an inactive state complexed with members of the NF-kappa-B inhibitor (I-kappa-B) family. In a conventional activation pathway, I-kappa-B is phosphorylated by I-kappa-B kinases (IKKs) in response to different activators, subsequently degraded thus liberating the active NF-kappa-B complex which translocates to the nucleus. RELA shows a weak DNA-binding site which could contribute directly to DNA binding in the NF-kappa-B complex. The chain is Putative transcription factor p65 homolog (rela) from Xenopus laevis (African clawed frog).